The primary structure comprises 1052 residues: Error-prone DNA polymerase (1052 aa).

It belongs to the DNA polymerase type-C family. DnaE2 subfamily.

The protein localises to the cytoplasm. The enzyme catalyses DNA(n) + a 2'-deoxyribonucleoside 5'-triphosphate = DNA(n+1) + diphosphate. Its function is as follows. DNA polymerase involved in damage-induced mutagenesis and translesion synthesis (TLS). It is not the major replicative DNA polymerase. This is Error-prone DNA polymerase from Bordetella parapertussis (strain 12822 / ATCC BAA-587 / NCTC 13253).